The following is a 275-amino-acid chain: Small ribosomal subunit protein uS3 (275 aa).

The KH type-2 domain maps to 38–106 (IRKLLATGLE…QVQLNILEVK (69 aa)). The disordered stretch occupies residues 215–275 (AAAAPASDRP…AEAPAESTES (61 aa)). Over residues 237 to 275 (SGSAGTTATSTEAGRAATSDAPAAGTAAAAEAPAESTES) the composition is skewed to low complexity.

The protein belongs to the universal ribosomal protein uS3 family. As to quaternary structure, part of the 30S ribosomal subunit. Forms a tight complex with proteins S10 and S14.

In terms of biological role, binds the lower part of the 30S subunit head. Binds mRNA in the 70S ribosome, positioning it for translation. The chain is Small ribosomal subunit protein uS3 from Mycolicibacterium smegmatis (strain ATCC 700084 / mc(2)155) (Mycobacterium smegmatis).